Consider the following 172-residue polypeptide: C-phycocyanin subunit beta (172 aa).

Position 72 is an N4-methylasparagine (Asn72). (2R,3E)-phycocyanobilin contacts are provided by Cys82 and Cys153.

It belongs to the phycobiliprotein family. Heterodimer of an alpha and a beta subunit, which further assembles into trimers and the trimers into hexamers. Post-translationally, contains two covalently linked bilin chromophores. The chromophore on position 82 is added by the phycocyanobilin lyase CpcUS, while the chromophore on position 153 is added by the phycocyanobilin lyase CpcT.

It localises to the cellular thylakoid membrane. In terms of biological role, light-harvesting photosynthetic bile pigment-protein from the phycobiliprotein complex (phycobilisome, PBS). Phycocyanin is the major phycobiliprotein in the PBS rod. In Picosynechococcus sp. (strain ATCC 27264 / PCC 7002 / PR-6) (Agmenellum quadruplicatum), this protein is C-phycocyanin subunit beta (cpcB).